The chain runs to 159 residues: Cyclic pyranopterin monophosphate synthase (159 aa).

Substrate contacts are provided by residues 75-77 (LCH) and 113-114 (ME). Aspartate 128 is an active-site residue.

This sequence belongs to the MoaC family. Homohexamer; trimer of dimers.

It catalyses the reaction (8S)-3',8-cyclo-7,8-dihydroguanosine 5'-triphosphate = cyclic pyranopterin phosphate + diphosphate. Its pathway is cofactor biosynthesis; molybdopterin biosynthesis. Catalyzes the conversion of (8S)-3',8-cyclo-7,8-dihydroguanosine 5'-triphosphate to cyclic pyranopterin monophosphate (cPMP). This is Cyclic pyranopterin monophosphate synthase from Cereibacter sphaeroides (strain ATCC 17023 / DSM 158 / JCM 6121 / CCUG 31486 / LMG 2827 / NBRC 12203 / NCIMB 8253 / ATH 2.4.1.) (Rhodobacter sphaeroides).